Consider the following 442-residue polypeptide: Transforming growth factor beta-2 proprotein (442 aa).

Residues 1 to 20 (MHYCVLRTFLLLHLVPVALS) form the signal peptide. N-linked (GlcNAc...) asparagine glycans are attached at residues Asn72, Asn168, and Asn269. 4 disulfide bridges follow: Cys337–Cys346, Cys345–Cys408, Cys374–Cys439, and Cys378–Cys441.

Belongs to the TGF-beta family. As to quaternary structure, interacts with the serine proteases, HTRA1 and HTRA3. Interacts with ASPN. Interacts with MFAP5. Interacts with Transforming growth factor beta-2 (TGF-beta-2) chain; interaction is non-covalent and maintains (TGF-beta-2) in a latent state. Interacts with LRRC32/GARP; leading to regulate activation of TGF-beta-2. Interacts with NREP; the interaction results in a decrease in TGFB2 autoinduction. In terms of assembly, transforming growth factor beta-2: Homodimer; disulfide-linked. Transforming growth factor beta-2: Interacts with TGF-beta receptors (TGFBR1 and TGFBR2), leading to signal transduction. The precursor proprotein is cleaved in the Golgi apparatus to form Transforming growth factor beta-2 (TGF-beta-2) and Latency-associated peptide (LAP) chains, which remain non-covalently linked, rendering TGF-beta-2 inactive. Expressed in cardiomyocytes. In terms of tissue distribution, expressed in the aorta, primary bronchus, uterus, heart, skeletal muscle, sciatic nerve and spinal cord but not in the intestine.

Its subcellular location is the secreted. It localises to the extracellular space. It is found in the extracellular matrix. Its function is as follows. Precursor of the Latency-associated peptide (LAP) and Transforming growth factor beta-2 (TGF-beta-2) chains, which constitute the regulatory and active subunit of TGF-beta-2, respectively. Functionally, required to maintain the Transforming growth factor beta-2 (TGF-beta-2) chain in a latent state during storage in extracellular matrix. Associates non-covalently with TGF-beta-2 and regulates its activation via interaction with 'milieu molecules', such as LTBP1 and LRRC32/GARP, that control activation of TGF-beta-2. Multifunctional protein that regulates various processes such as angiogenesis and heart development. Activation into mature form follows different steps: following cleavage of the proprotein in the Golgi apparatus, Latency-associated peptide (LAP) and Transforming growth factor beta-2 (TGF-beta-2) chains remain non-covalently linked rendering TGF-beta-2 inactive during storage in extracellular matrix. At the same time, LAP chain interacts with 'milieu molecules', such as LTBP1 and LRRC32/GARP, that control activation of TGF-beta-2 and maintain it in a latent state during storage in extracellular milieus. Once activated following release of LAP, TGF-beta-2 acts by binding to TGF-beta receptors (TGFBR1 and TGFBR2), which transduce signal. The chain is Transforming growth factor beta-2 proprotein (Tgfb2) from Rattus norvegicus (Rat).